Here is a 309-residue protein sequence, read N- to C-terminus: THO complex subunit Tho3 (309 aa).

WD repeat units follow at residues 22-61 (GQQG…FKFT), 65-107 (GNRG…PIAE), 109-148 (ESNY…IMET), 192-231 (AHNS…CERS), 234-273 (RMDY…QIWK), and 275-309 (PTNG…IFGL).

Belongs to the THOC3 family. In terms of assembly, component of the transcription/export (TREX) complex, which is at least is formed of SUB2, TEX1 and YRA1 and the THO complex composed of HPR1, MFT1, THO2 and THP1.

Its subcellular location is the nucleus. Its function is as follows. Component of the TREX complex, which operates in coupling transcription elongation to mRNA export. This Schizosaccharomyces pombe (strain 972 / ATCC 24843) (Fission yeast) protein is THO complex subunit Tho3 (THO3).